The primary structure comprises 98 residues: MNQERIYKVLLGPVVSEKSAAVGEASNQVVFKVLADASKVEIKAAVQALFNTKVESVRVLNVKGKTKRTRYGVGKRSDWKKAYVRLEQGQEIDFAVAE.

It belongs to the universal ribosomal protein uL23 family. In terms of assembly, part of the 50S ribosomal subunit. Contacts protein L29, and trigger factor when it is bound to the ribosome.

Functionally, one of the early assembly proteins it binds 23S rRNA. One of the proteins that surrounds the polypeptide exit tunnel on the outside of the ribosome. Forms the main docking site for trigger factor binding to the ribosome. The protein is Large ribosomal subunit protein uL23 of Cellvibrio japonicus (strain Ueda107) (Pseudomonas fluorescens subsp. cellulosa).